The sequence spans 616 residues: Dihydroxy-acid dehydratase (616 aa).

Asp-81 lines the Mg(2+) pocket. Cys-122 contacts [2Fe-2S] cluster. Mg(2+)-binding residues include Asp-123 and Lys-124. An N6-carboxylysine modification is found at Lys-124. Cys-195 lines the [2Fe-2S] cluster pocket. Glu-491 contacts Mg(2+). Catalysis depends on Ser-517, which acts as the Proton acceptor.

It belongs to the IlvD/Edd family. Homodimer. It depends on [2Fe-2S] cluster as a cofactor. Mg(2+) serves as cofactor.

The catalysed reaction is (2R)-2,3-dihydroxy-3-methylbutanoate = 3-methyl-2-oxobutanoate + H2O. It catalyses the reaction (2R,3R)-2,3-dihydroxy-3-methylpentanoate = (S)-3-methyl-2-oxopentanoate + H2O. The protein operates within amino-acid biosynthesis; L-isoleucine biosynthesis; L-isoleucine from 2-oxobutanoate: step 3/4. It participates in amino-acid biosynthesis; L-valine biosynthesis; L-valine from pyruvate: step 3/4. Its function is as follows. Functions in the biosynthesis of branched-chain amino acids. Catalyzes the dehydration of (2R,3R)-2,3-dihydroxy-3-methylpentanoate (2,3-dihydroxy-3-methylvalerate) into 2-oxo-3-methylpentanoate (2-oxo-3-methylvalerate) and of (2R)-2,3-dihydroxy-3-methylbutanoate (2,3-dihydroxyisovalerate) into 2-oxo-3-methylbutanoate (2-oxoisovalerate), the penultimate precursor to L-isoleucine and L-valine, respectively. This chain is Dihydroxy-acid dehydratase, found in Escherichia coli O1:K1 / APEC.